Reading from the N-terminus, the 374-residue chain is Severin (374 aa).

Gelsolin-like repeat units follow at residues 58–109 (FTLE…DEYG), 180–220 (EGKT…KCSA), and 278–369 (EVIK…SFLK).

This sequence belongs to the villin/gelsolin family.

Its function is as follows. Severin blocks the ends of F-actin and causes the fragmentation and depolymerization of actin filaments. This severin binds stably with actin both in a Ca(2+) dependent and a Ca(2+) independent manner. This is Severin (AG8) from Echinococcus granulosus (Hydatid tapeworm).